We begin with the raw amino-acid sequence, 437 residues long: Sodium/bile acid cotransporter 4 (437 aa).

Topologically, residues 1–103 (MDSLDNTTLL…PPFWDTPLNH (103 aa)) are extracellular. N-linked (GlcNAc...) asparagine glycosylation is found at N6 and N20. The segment at 15–79 (SLLPDNLTLS…SSSLTVGVAG (65 aa)) is disordered. Over residues 22–41 (TLSPNAGSPSASTLSPLAVT) the composition is skewed to polar residues. Residues 42 to 74 (SSPGPGLSLAPSPSIGFSPEATPTPEPTSSSLT) are compositionally biased toward low complexity. Residues 104-124 (GLNVFVGAALCITMLGLGCTV) traverse the membrane as a helical segment. Topologically, residues 125–140 (DVNHFGAHVRRPVGAL) are cytoplasmic. A helical transmembrane segment spans residues 141–161 (LAALCQFGFLPLLAFLLALIF). Topologically, residues 162 to 197 (KLDEVAAVAVLLCGCCPGGNLSNLMSLLVDGDMNLS) are extracellular. Residues N181 and N195 are each glycosylated (N-linked (GlcNAc...) asparagine). The helical transmembrane segment at 198–218 (IIMTISSTLLALVLMPLCLWI) threads the bilayer. At 219–233 (YSRAWINTPLVQLLP) the chain is on the cytoplasmic side. The helical transmembrane segment at 234 to 254 (LGAVTLTLCSTLIPIGLGVFI) threads the bilayer. At 255–267 (RYKYNRVADYIVK) the chain is on the extracellular side. The chain crosses the membrane as a helical span at residues 268 to 288 (VSLWSLLVTLVVLFIMTGTML). The Cytoplasmic segment spans residues 289 to 291 (GPE). A helical membrane pass occupies residues 292–312 (LLASIPATVYVVAIFMPLAGY). Topologically, residues 313-360 (ASGYGLATLFHLPPNCKRTVCLETGSQNVQLCTAILKLAFPPRFIGSM) are extracellular. The chain crosses the membrane as a helical span at residues 361-381 (YMFPLLYALFQSAEAGVFVLI). Residues 382–437 (YKMYGSEILHKREALDEDEDTDISYKKLKEEEMADTSYGTVGTDDLVMMETTQTAL) lie on the Cytoplasmic side of the membrane.

The protein belongs to the bile acid:sodium symporter (BASS) (TC 2.A.28) family. Post-translationally, activated following N-terminal proteolytic cleavage by thrombin and/or proteases. As to expression, highest expression in the brain and significantly above background levels in the eye, prostate, and whole embryo tissue preparations.

The protein localises to the cell membrane. Its function is as follows. Transporter for bile acids. The sequence is that of Sodium/bile acid cotransporter 4 (Slc10a4) from Mus musculus (Mouse).